Reading from the N-terminus, the 146-residue chain is Large ribosomal subunit protein uL15 (146 aa).

Positions 1-13 are enriched in basic and acidic residues; sequence MKLHELKPAEGSR. The interval 1 to 57 is disordered; that stretch reads MKLHELKPAEGSRKVRNRVGRGTSSGNGKTSGRGQKGQKARSGVGLRPGFEGGQTPL. Over residues 23–35 the composition is skewed to gly residues; that stretch reads TSSGNGKTSGRGQ.

It belongs to the universal ribosomal protein uL15 family. As to quaternary structure, part of the 50S ribosomal subunit.

In terms of biological role, binds to the 23S rRNA. The protein is Large ribosomal subunit protein uL15 of Streptococcus thermophilus (strain ATCC BAA-491 / LMD-9).